The chain runs to 468 residues: Cell division protein FtsA (468 aa).

The segment at 416-468 (NKKDTHENEVESSDEEIYQSEDNHQEHKQNHEHVQDKDKEESKFKKLMKSLFE) is disordered. Positions 425-434 (VESSDEEIYQ) are enriched in acidic residues. Over residues 436–459 (EDNHQEHKQNHEHVQDKDKEESKF) the composition is skewed to basic and acidic residues.

The protein belongs to the FtsA/MreB family. Self-interacts. Interacts with FtsZ.

The protein resides in the cell membrane. In terms of biological role, cell division protein that is involved in the assembly of the Z ring. May serve as a membrane anchor for the Z ring. The chain is Cell division protein FtsA from Staphylococcus aureus (strain MRSA252).